The sequence spans 138 residues: Large ribosomal subunit protein uL14 (138 aa).

It belongs to the universal ribosomal protein uL14 family. As to quaternary structure, part of the 50S ribosomal subunit. Forms a cluster with proteins L3 and L24e, part of which may contact the 16S rRNA in 2 intersubunit bridges.

Functionally, binds to 23S rRNA. Forms part of two intersubunit bridges in the 70S ribosome. The chain is Large ribosomal subunit protein uL14 from Hyperthermus butylicus (strain DSM 5456 / JCM 9403 / PLM1-5).